A 744-amino-acid polypeptide reads, in one-letter code: Phosphoribosylformylglycinamidine synthase subunit PurL (744 aa).

Residue H50 is part of the active site. Residues Y53 and K92 each coordinate ATP. A Mg(2+)-binding site is contributed by E94. Substrate-binding positions include 95 to 98 (SHNH) and R117. The active-site Proton acceptor is the H96. D118 lines the Mg(2+) pocket. Q241 lines the substrate pocket. Mg(2+) is bound at residue D269. 313–315 (ESQ) serves as a coordination point for substrate. 2 residues coordinate ATP: D495 and G532. Mg(2+) is bound at residue N533. Residue S535 coordinates substrate.

This sequence belongs to the FGAMS family. In terms of assembly, monomer. Part of the FGAM synthase complex composed of 1 PurL, 1 PurQ and 2 PurS subunits.

It is found in the cytoplasm. The enzyme catalyses N(2)-formyl-N(1)-(5-phospho-beta-D-ribosyl)glycinamide + L-glutamine + ATP + H2O = 2-formamido-N(1)-(5-O-phospho-beta-D-ribosyl)acetamidine + L-glutamate + ADP + phosphate + H(+). It functions in the pathway purine metabolism; IMP biosynthesis via de novo pathway; 5-amino-1-(5-phospho-D-ribosyl)imidazole from N(2)-formyl-N(1)-(5-phospho-D-ribosyl)glycinamide: step 1/2. In terms of biological role, part of the phosphoribosylformylglycinamidine synthase complex involved in the purines biosynthetic pathway. Catalyzes the ATP-dependent conversion of formylglycinamide ribonucleotide (FGAR) and glutamine to yield formylglycinamidine ribonucleotide (FGAM) and glutamate. The FGAM synthase complex is composed of three subunits. PurQ produces an ammonia molecule by converting glutamine to glutamate. PurL transfers the ammonia molecule to FGAR to form FGAM in an ATP-dependent manner. PurS interacts with PurQ and PurL and is thought to assist in the transfer of the ammonia molecule from PurQ to PurL. The chain is Phosphoribosylformylglycinamidine synthase subunit PurL from Rhizobium johnstonii (strain DSM 114642 / LMG 32736 / 3841) (Rhizobium leguminosarum bv. viciae).